The following is a 554-amino-acid chain: ATP synthase subunit alpha (554 aa).

172–179 (GDRKTGKT) is an ATP binding site. The tract at residues 528 to 554 (LDEEELEKESVKVKKPAPEKKAKKEQK) is disordered. Residues 535–554 (KESVKVKKPAPEKKAKKEQK) show a composition bias toward basic and acidic residues.

This sequence belongs to the ATPase alpha/beta chains family. F-type ATPases have 2 components, CF(1) - the catalytic core - and CF(0) - the membrane proton channel. CF(1) has five subunits: alpha(3), beta(3), gamma(1), delta(1), epsilon(1). CF(0) has three main subunits: a(1), b(2) and c(9-12). The alpha and beta chains form an alternating ring which encloses part of the gamma chain. CF(1) is attached to CF(0) by a central stalk formed by the gamma and epsilon chains, while a peripheral stalk is formed by the delta and b chains.

It localises to the cell membrane. The catalysed reaction is ATP + H2O + 4 H(+)(in) = ADP + phosphate + 5 H(+)(out). Its function is as follows. Produces ATP from ADP in the presence of a proton gradient across the membrane. The alpha chain is a regulatory subunit. This chain is ATP synthase subunit alpha, found in Mycolicibacterium paratuberculosis (strain ATCC BAA-968 / K-10) (Mycobacterium paratuberculosis).